The sequence spans 252 residues: Small ribosomal subunit protein uS3 (252 aa).

The region spanning Ile-39–Lys-111 is the KH type-2 domain. A disordered region spans residues Lys-222–Asn-252. Over residues Gly-241–Asn-252 the composition is skewed to polar residues.

This sequence belongs to the universal ribosomal protein uS3 family. As to quaternary structure, part of the 30S ribosomal subunit. Forms a tight complex with proteins S10 and S14.

Its function is as follows. Binds the lower part of the 30S subunit head. Binds mRNA in the 70S ribosome, positioning it for translation. This is Small ribosomal subunit protein uS3 from Onion yellows phytoplasma (strain OY-M).